The primary structure comprises 266 residues: NAD kinase 1 (266 aa).

Catalysis depends on Asp45, which acts as the Proton acceptor. Residues 45–46 (DG), 122–123 (NE), and Arg148 each bind NAD(+). An ATP-binding site is contributed by Asp150. Residues Ser158 and 161–166 (TAYNKA) contribute to the NAD(+) site.

The protein belongs to the NAD kinase family. In terms of assembly, homodimer. Requires Ca(2+) as cofactor. The cofactor is Mn(2+).

It localises to the cytoplasm. It carries out the reaction NAD(+) + ATP = ADP + NADP(+) + H(+). Its activity is regulated as follows. Allosterically inhibited by NADP and activated by quinolinic acid. Strongly inhibited by HgCl(2). Its function is as follows. Involved in the regulation of the intracellular balance of NAD and NADP, and is a key enzyme in the biosynthesis of NADP. Catalyzes specifically the phosphorylation on 2'-hydroxyl of the adenosine moiety of NAD to yield NADP. It can use ATP and other nucleoside triphosphates (GTP, UTP) as well as inorganic polyphosphate (poly(P)) as a source of phosphorus. This Bacillus subtilis (strain 168) protein is NAD kinase 1 (ppnKA).